A 105-amino-acid polypeptide reads, in one-letter code: Large ribosomal subunit protein uL24 (105 aa).

Belongs to the universal ribosomal protein uL24 family. Part of the 50S ribosomal subunit.

One of two assembly initiator proteins, it binds directly to the 5'-end of the 23S rRNA, where it nucleates assembly of the 50S subunit. Functionally, one of the proteins that surrounds the polypeptide exit tunnel on the outside of the subunit. This Sphingopyxis alaskensis (strain DSM 13593 / LMG 18877 / RB2256) (Sphingomonas alaskensis) protein is Large ribosomal subunit protein uL24.